Reading from the N-terminus, the 244-residue chain is Ribosome maturation factor RimM (244 aa).

The segment at Met-1 to Met-58 is disordered. Residues Lys-13–Lys-22 are compositionally biased toward low complexity. Basic and acidic residues predominate over residues Lys-35–Ala-44. The segment covering Lys-45–Glu-57 has biased composition (low complexity). Positions Ala-163–Tyr-244 constitute a PRC barrel domain.

It belongs to the RimM family. As to quaternary structure, binds ribosomal protein uS19.

The protein resides in the cytoplasm. Its function is as follows. An accessory protein needed during the final step in the assembly of 30S ribosomal subunit, possibly for assembly of the head region. Essential for efficient processing of 16S rRNA. May be needed both before and after RbfA during the maturation of 16S rRNA. It has affinity for free ribosomal 30S subunits but not for 70S ribosomes. The polypeptide is Ribosome maturation factor RimM (Paraburkholderia xenovorans (strain LB400)).